The primary structure comprises 355 residues: N-acetyl-gamma-glutamyl-phosphate reductase (355 aa).

Cys152 is an active-site residue.

This sequence belongs to the NAGSA dehydrogenase family. Type 1 subfamily.

It localises to the cytoplasm. The enzyme catalyses N-acetyl-L-glutamate 5-semialdehyde + phosphate + NADP(+) = N-acetyl-L-glutamyl 5-phosphate + NADPH + H(+). Its pathway is amino-acid biosynthesis; L-arginine biosynthesis; N(2)-acetyl-L-ornithine from L-glutamate: step 3/4. In terms of biological role, catalyzes the NADPH-dependent reduction of N-acetyl-5-glutamyl phosphate to yield N-acetyl-L-glutamate 5-semialdehyde. This Psychrobacter cryohalolentis (strain ATCC BAA-1226 / DSM 17306 / VKM B-2378 / K5) protein is N-acetyl-gamma-glutamyl-phosphate reductase.